Here is a 116-residue protein sequence, read N- to C-terminus: Large ribosomal subunit protein uL18 (116 aa).

It belongs to the universal ribosomal protein uL18 family. Part of the 50S ribosomal subunit; part of the 5S rRNA/L5/L18/L25 subcomplex. Contacts the 5S and 23S rRNAs.

Its function is as follows. This is one of the proteins that bind and probably mediate the attachment of the 5S RNA into the large ribosomal subunit, where it forms part of the central protuberance. The polypeptide is Large ribosomal subunit protein uL18 (Pseudomonas fluorescens (strain ATCC BAA-477 / NRRL B-23932 / Pf-5)).